The sequence spans 684 residues: Early phosphoprotein p84 (684 aa).

Disordered regions lie at residues L166–P301, S317–A336, V357–T393, R407–F452, and S569–F657. The segment covering E180–E191 has biased composition (basic and acidic residues). Residues A201–G220 show a composition bias toward gly residues. Composition is skewed to basic and acidic residues over residues R232–P245 and R258–H272. Positions K261–K264 match the Nuclear localization signal motif. Positions G285 to G296 are enriched in gly residues. Residues N326–N335 show a composition bias toward basic residues. Positions S359–S377 are enriched in low complexity. Polar residues predominate over residues S425 to A442. The segment covering P578–G587 has biased composition (pro residues). Over residues R598–R608 the composition is skewed to gly residues. Low complexity predominate over residues R612–S622.

The protein belongs to the herpesviridae U79/UL112 family. In terms of assembly, isoforms 1, 2, 3 and 4 interacts with themselves and with each other via their shared N-terminal regions; these interactions are important to both their intranuclear targeting and the recruitment of UL44 to subnuclear sites for viral replication.

The protein localises to the host nucleus. Its subcellular location is the virion. Needed for efficient replication. Recruits the DNA polymerase processivity factor to pre-replication foci. This chain is Early phosphoprotein p84 (UL112/UL113), found in Homo sapiens (Human).